The sequence spans 112 residues: Small ribosomal subunit protein uS11c (112 aa).

It belongs to the universal ribosomal protein uS11 family. As to quaternary structure, part of the 30S ribosomal subunit.

It localises to the plastid. This chain is Small ribosomal subunit protein uS11c, found in Euglena longa (Euglenophycean alga).